The chain runs to 152 residues: Gamma-glutamylaminecyclotransferase C (152 aa).

9–12 (YGSL) contacts substrate. Glu84 serves as the catalytic Proton acceptor.

The protein belongs to the gamma-glutamylcyclotransferase family.

The enzyme catalyses epsilon-(gamma-L-glutamyl)-L-lysine = 5-oxo-L-proline + L-lysine. Its function is as follows. May contribute to degradation of proteins cross-linked by transglutaminases by degrading the cross-link between a lysine and a glutamic acid residue. Catalyzes the formation of 5-oxo-L-proline from L-gamma-glutamyl-L-epsilon-lysine. In Danio rerio (Zebrafish), this protein is Gamma-glutamylaminecyclotransferase C (ggact.3).